A 149-amino-acid chain; its full sequence is Large ribosomal subunit protein eL19 (149 aa).

Positions 45–94 (VADGTIDAEDTQGNSRGRARERDAKESYGHKKGAGSRKGKAGARQNEKRE) are disordered. Over residues 62-73 (RARERDAKESYG) the composition is skewed to basic and acidic residues. Residues 74–85 (HKKGAGSRKGKA) are compositionally biased toward basic residues.

This sequence belongs to the eukaryotic ribosomal protein eL19 family. Part of the 50S ribosomal subunit.

In terms of biological role, binds to the 23S rRNA. The protein is Large ribosomal subunit protein eL19 of Halobacterium salinarum (strain ATCC 700922 / JCM 11081 / NRC-1) (Halobacterium halobium).